Reading from the N-terminus, the 226-residue chain is 2,3-bisphosphoglycerate-dependent phosphoglycerate mutase (226 aa).

Residues R8–N15, T21–G22, R58, E109–Y112, K120, R136–R137, and G180–N181 each bind substrate. The active-site Tele-phosphohistidine intermediate is the H9. The active-site Proton donor/acceptor is the E109.

This sequence belongs to the phosphoglycerate mutase family. BPG-dependent PGAM subfamily.

It catalyses the reaction (2R)-2-phosphoglycerate = (2R)-3-phosphoglycerate. It functions in the pathway carbohydrate degradation; glycolysis; pyruvate from D-glyceraldehyde 3-phosphate: step 3/5. In terms of biological role, catalyzes the interconversion of 2-phosphoglycerate and 3-phosphoglycerate. The protein is 2,3-bisphosphoglycerate-dependent phosphoglycerate mutase of Chlamydia trachomatis serovar L2b (strain UCH-1/proctitis).